We begin with the raw amino-acid sequence, 354 residues long: Glycerol-1-phosphate dehydrogenase [NAD(P)+] (354 aa).

NAD(+) is bound by residues 102–106 and 124–127; these read GRSID and TAAS. D129 serves as a coordination point for substrate. S133 contacts NAD(+). D176 provides a ligand contact to substrate. Zn(2+) contacts are provided by D176 and H256. Residue H260 coordinates substrate. H272 contributes to the Zn(2+) binding site.

Belongs to the glycerol-1-phosphate dehydrogenase family. The cofactor is Zn(2+).

The protein localises to the cytoplasm. It catalyses the reaction sn-glycerol 1-phosphate + NAD(+) = dihydroxyacetone phosphate + NADH + H(+). The catalysed reaction is sn-glycerol 1-phosphate + NADP(+) = dihydroxyacetone phosphate + NADPH + H(+). Its pathway is membrane lipid metabolism; glycerophospholipid metabolism. Its function is as follows. Catalyzes the NAD(P)H-dependent reduction of dihydroxyacetonephosphate (DHAP or glycerone phosphate) to glycerol 1-phosphate (G1P). The G1P thus generated is used as the glycerophosphate backbone of phospholipids in the cellular membranes of Archaea. The protein is Glycerol-1-phosphate dehydrogenase [NAD(P)+] of Methanothrix thermoacetophila (strain DSM 6194 / JCM 14653 / NBRC 101360 / PT) (Methanosaeta thermophila).